Consider the following 57-residue polypeptide: Large ribosomal subunit protein bL32 (57 aa).

It belongs to the bacterial ribosomal protein bL32 family.

This is Large ribosomal subunit protein bL32 from Geobacillus kaustophilus (strain HTA426).